We begin with the raw amino-acid sequence, 215 residues long: Methylosome subunit pICln (215 aa).

Disordered stretches follow at residues 88–120 and 160–215; these read GDPP…DEDD and HPDS…DADE. 3 stretches are compositionally biased toward acidic residues: residues 105–120, 167–190, and 203–215; these read AEVD…DEDD, DSED…EDDA, and LDDD…DADE.

This sequence belongs to the pICln (TC 1.A.47) family. Component of the methylosome, a 20S complex containing at least CLNS1A/pICln, PRMT5/SKB1 and WDR77/MEP50; may mediate SNRPD1 and SNRPD3 methylation. Forms a 6S pICln-Sm complex composed of CLNS1A/pICln, SNRPD1, SNRPD2, SNRPE, SNRPF and SNRPG; ring-like structure where CLNS1A/pICln mimics additional Sm proteins and which is unable to assemble into the core snRNP.

The protein localises to the cytoplasm. Its subcellular location is the cytosol. It localises to the nucleus. The protein resides in the cytoskeleton. Its function is as follows. Involved in both the assembly of spliceosomal snRNPs and the methylation of Sm proteins. Chaperone that regulates the assembly of spliceosomal U1, U2, U4 and U5 small nuclear ribonucleoproteins (snRNPs), the building blocks of the spliceosome, and thereby plays an important role in the splicing of cellular pre-mRNAs. Most spliceosomal snRNPs contain a common set of Sm proteins SNRPB, SNRPD1, SNRPD2, SNRPD3, SNRPE, SNRPF and SNRPG that assemble in a heptameric protein ring on the Sm site of the small nuclear RNA to form the core snRNP (Sm core). In the cytosol, the Sm proteins SNRPD1, SNRPD2, SNRPE, SNRPF and SNRPG are trapped in an inactive 6S pICln-Sm complex by the chaperone CLNS1A that controls the assembly of the core snRNP. Dissociation by the SMN complex of CLNS1A from the trapped Sm proteins and their transfer to an SMN-Sm complex triggers the assembly of core snRNPs and their transport to the nucleus. The polypeptide is Methylosome subunit pICln (icln) (Drosophila melanogaster (Fruit fly)).